The chain runs to 298 residues: Zinc finger protein-like 1 homolog (298 aa).

The B box-type; degenerate zinc-finger motif lies at 1–43; it reads MGLCKCPKRLVTNQFCFEHRVNVCEHCMVQSHPKCIVQSYLQW. An RING-type; atypical zinc finger spans residues 53–101; it reads CTLCGTTLEQGDCVRLVCYHVFHWDCLNARQAALPANTAPRGHQCPACT. A disordered region spans residues 199–230; sequence AGDYASSRRPLLPRQSPIGGTDRDDNKYQRRT. Ser-214 carries the post-translational modification Phosphoserine. A helical membrane pass occupies residues 255-275; that stretch reads WFLVTAGILAFVLFVYLMAWL.

It belongs to the ZFPL1 family.

The protein resides in the membrane. The chain is Zinc finger protein-like 1 homolog from Drosophila erecta (Fruit fly).